The sequence spans 343 residues: Large ribosomal subunit protein uL3 (343 aa).

2 disordered regions span residues 1–31 and 238–262; these read MGHR…TPRS and KGSR…PGQM.

This sequence belongs to the universal ribosomal protein uL3 family. Part of the 50S ribosomal subunit. Forms a cluster with proteins L14 and L24e.

In terms of biological role, one of the primary rRNA binding proteins, it binds directly near the 3'-end of the 23S rRNA, where it nucleates assembly of the 50S subunit. The sequence is that of Large ribosomal subunit protein uL3 from Sulfurisphaera tokodaii (strain DSM 16993 / JCM 10545 / NBRC 100140 / 7) (Sulfolobus tokodaii).